The following is a 1403-amino-acid chain: DNA-directed RNA polymerase subunit beta' (1403 aa).

Cysteine 70, cysteine 72, cysteine 85, and cysteine 88 together coordinate Zn(2+). 3 residues coordinate Mg(2+): aspartate 461, aspartate 463, and aspartate 465. Residues cysteine 816, cysteine 890, cysteine 897, and cysteine 900 each coordinate Zn(2+).

It belongs to the RNA polymerase beta' chain family. In terms of assembly, the RNAP catalytic core consists of 2 alpha, 1 beta, 1 beta' and 1 omega subunit. When a sigma factor is associated with the core the holoenzyme is formed, which can initiate transcription. The cofactor is Mg(2+). It depends on Zn(2+) as a cofactor.

It catalyses the reaction RNA(n) + a ribonucleoside 5'-triphosphate = RNA(n+1) + diphosphate. Its function is as follows. DNA-dependent RNA polymerase catalyzes the transcription of DNA into RNA using the four ribonucleoside triphosphates as substrates. The protein is DNA-directed RNA polymerase subunit beta' of Dechloromonas aromatica (strain RCB).